The primary structure comprises 30 residues: Dermaseptin-DI4 (30 aa).

Expressed by the skin glands.

The protein resides in the secreted. Its function is as follows. Antibacterial activity against Gram-positive bacteria S.aureus and E.faecalis, and Gram-negative bacteria P.aeruginosa and E.coli. The chain is Dermaseptin-DI4 from Phyllomedusa distincta (Monkey frog).